Consider the following 200-residue polypeptide: Putative 3-methyladenine DNA glycosylase (200 aa).

This sequence belongs to the DNA glycosylase MPG family.

The chain is Putative 3-methyladenine DNA glycosylase from Methanocella arvoryzae (strain DSM 22066 / NBRC 105507 / MRE50).